Here is a 294-residue protein sequence, read N- to C-terminus: Ribosomal RNA small subunit methyltransferase A (294 aa).

Residues asparagine 31, leucine 33, glycine 58, glutamate 79, aspartate 111, and asparagine 136 each coordinate S-adenosyl-L-methionine.

It belongs to the class I-like SAM-binding methyltransferase superfamily. rRNA adenine N(6)-methyltransferase family. RsmA subfamily.

The protein resides in the cytoplasm. It catalyses the reaction adenosine(1518)/adenosine(1519) in 16S rRNA + 4 S-adenosyl-L-methionine = N(6)-dimethyladenosine(1518)/N(6)-dimethyladenosine(1519) in 16S rRNA + 4 S-adenosyl-L-homocysteine + 4 H(+). In terms of biological role, specifically dimethylates two adjacent adenosines (A1518 and A1519) in the loop of a conserved hairpin near the 3'-end of 16S rRNA in the 30S particle. May play a critical role in biogenesis of 30S subunits. In Lactobacillus helveticus (strain DPC 4571), this protein is Ribosomal RNA small subunit methyltransferase A.